Here is a 340-residue protein sequence, read N- to C-terminus: Spermidine synthase 2 (340 aa).

Residues 1 to 41 (MSSTQEASVTDLPVKRPREAEEDNNGGAMETENGGGEIKEP) are disordered. N-acetylserine is present on Ser-2. The PABS domain occupies 49-286 (PGWFSEISPM…GVIGFMLCSS (238 aa)). Gln-80 lines the S-adenosyl 3-(methylsulfanyl)propylamine pocket. Tyr-110 contributes to the putrescine binding site. S-adenosyl 3-(methylsulfanyl)propylamine is bound by residues Gln-111, Asp-135, Glu-155, 186–187 (DG), and Asp-205. The active-site Proton acceptor is the Asp-205. Putrescine-binding positions include 205–208 (DSSD) and Tyr-274.

The protein belongs to the spermidine/spermine synthase family. Heterodimer. Component of a multiprotein complex. Interacts with SPMS and SPDSYN1.

The catalysed reaction is S-adenosyl 3-(methylsulfanyl)propylamine + putrescine = S-methyl-5'-thioadenosine + spermidine + H(+). It functions in the pathway amine and polyamine biosynthesis; spermidine biosynthesis; spermidine from putrescine: step 1/1. In Arabidopsis thaliana (Mouse-ear cress), this protein is Spermidine synthase 2 (SPDSYN2).